Consider the following 128-residue polypeptide: 3-aminoacrylate deaminase RutC (128 aa).

Belongs to the RutC family.

The enzyme catalyses (Z)-3-aminoacrylate + H2O + H(+) = 3-oxopropanoate + NH4(+). Functionally, involved in pyrimidine catabolism. Catalyzes the deamination of 3-aminoacrylate to malonic semialdehyde, a reaction that can also occur spontaneously. RutC may facilitate the reaction and modulate the metabolic fitness, rather than catalyzing essential functions. In Enterobacter cloacae subsp. cloacae (strain ATCC 13047 / DSM 30054 / NBRC 13535 / NCTC 10005 / WDCM 00083 / NCDC 279-56), this protein is 3-aminoacrylate deaminase RutC.